A 389-amino-acid chain; its full sequence is S-adenosylmethionine synthase (389 aa).

H17 is an ATP binding site. D19 is a binding site for Mg(2+). E45 contributes to the K(+) binding site. Residues E58 and Q101 each contribute to the L-methionine site. The tract at residues 101-111 (QSPDIAQGVTE) is flexible loop. ATP is bound by residues 168 to 170 (DSK), 234 to 235 (RF), D243, 249 to 250 (RK), A266, and K270. D243 contributes to the L-methionine binding site. K274 contributes to the L-methionine binding site.

The protein belongs to the AdoMet synthase family. As to quaternary structure, homotetramer; dimer of dimers. Mg(2+) serves as cofactor. Requires K(+) as cofactor.

It localises to the cytoplasm. The catalysed reaction is L-methionine + ATP + H2O = S-adenosyl-L-methionine + phosphate + diphosphate. Its pathway is amino-acid biosynthesis; S-adenosyl-L-methionine biosynthesis; S-adenosyl-L-methionine from L-methionine: step 1/1. Catalyzes the formation of S-adenosylmethionine (AdoMet) from methionine and ATP. The overall synthetic reaction is composed of two sequential steps, AdoMet formation and the subsequent tripolyphosphate hydrolysis which occurs prior to release of AdoMet from the enzyme. In Geobacter sp. (strain M21), this protein is S-adenosylmethionine synthase.